The following is a 1563-amino-acid chain: Pentafunctional AROM polypeptide (1563 aa).

The 3-dehydroquinate synthase stretch occupies residues 1–382; it reads MAESSSNPTR…YEPKASVVED (382 aa). NAD(+)-binding positions include 48 to 50, 82 to 85, 113 to 115, and D118; these read DTN, EYSK, and GGV. Residue R129 coordinates 7-phospho-2-dehydro-3-deoxy-D-arabino-heptonate. 138 to 139 provides a ligand contact to NAD(+); the sequence is TT. 7-phospho-2-dehydro-3-deoxy-D-arabino-heptonate contacts are provided by D145 and K151. K160 serves as a coordination point for NAD(+). 7-phospho-2-dehydro-3-deoxy-D-arabino-heptonate is bound at residue N161. Residues 178 to 181 and N189 each bind NAD(+); that span reads FLNT. Position 193 (E193) interacts with Zn(2+). Residues 193–196 and K248 contribute to the 7-phospho-2-dehydro-3-deoxy-D-arabino-heptonate site; that span reads EVIK. The Proton acceptor; for 3-dehydroquinate synthase activity role is filled by E258. 7-phospho-2-dehydro-3-deoxy-D-arabino-heptonate contacts are provided by residues 262–266 and H269; that span reads RNLLN. Residue H269 participates in Zn(2+) binding. H273 acts as the Proton acceptor; for 3-dehydroquinate synthase activity in catalysis. 7-phospho-2-dehydro-3-deoxy-D-arabino-heptonate contacts are provided by H285 and K354. H285 contributes to the Zn(2+) binding site. An EPSP synthase region spans residues 395–834; that stretch reads VHAGVPKDLK…WDTMSNYFKS (440 aa). The For EPSP synthase activity role is filled by C816. Residues 836–850 show a composition bias toward basic and acidic residues; sequence LEGEEEPHSSHVSHE. The segment at 836–857 is disordered; that stretch reads LEGEEEPHSSHVSHEKPRKGNP. The interval 857–1051 is shikimate kinase; that stretch reads PKSIFIIGMR…KKKPQSSFVS (195 aa). 864-871 serves as a coordination point for ATP; it reads GMRGAGKS. The segment at 1052-1265 is 3-dehydroquinase; the sequence is LTVPNVSKAL…AAPGQLSAAE (214 aa). H1168 acts as the Proton acceptor; for 3-dehydroquinate dehydratase activity in catalysis. K1196 serves as the catalytic Schiff-base intermediate with substrate; for 3-dehydroquinate dehydratase activity. Positions 1278–1563 are shikimate dehydrogenase; the sequence is PRSFYLFGKP…TDAQAAVMGN (286 aa).

In the N-terminal section; belongs to the sugar phosphate cyclases superfamily. Dehydroquinate synthase family. The protein in the 2nd section; belongs to the EPSP synthase family. This sequence in the 3rd section; belongs to the shikimate kinase family. It in the 4th section; belongs to the type-I 3-dehydroquinase family. In the C-terminal section; belongs to the shikimate dehydrogenase family. As to quaternary structure, homodimer. Zn(2+) serves as cofactor.

The protein resides in the cytoplasm. It catalyses the reaction 7-phospho-2-dehydro-3-deoxy-D-arabino-heptonate = 3-dehydroquinate + phosphate. The catalysed reaction is 3-dehydroquinate = 3-dehydroshikimate + H2O. It carries out the reaction shikimate + NADP(+) = 3-dehydroshikimate + NADPH + H(+). The enzyme catalyses shikimate + ATP = 3-phosphoshikimate + ADP + H(+). It catalyses the reaction 3-phosphoshikimate + phosphoenolpyruvate = 5-O-(1-carboxyvinyl)-3-phosphoshikimate + phosphate. Its pathway is metabolic intermediate biosynthesis; chorismate biosynthesis; chorismate from D-erythrose 4-phosphate and phosphoenolpyruvate: step 2/7. It participates in metabolic intermediate biosynthesis; chorismate biosynthesis; chorismate from D-erythrose 4-phosphate and phosphoenolpyruvate: step 3/7. The protein operates within metabolic intermediate biosynthesis; chorismate biosynthesis; chorismate from D-erythrose 4-phosphate and phosphoenolpyruvate: step 4/7. It functions in the pathway metabolic intermediate biosynthesis; chorismate biosynthesis; chorismate from D-erythrose 4-phosphate and phosphoenolpyruvate: step 5/7. Its pathway is metabolic intermediate biosynthesis; chorismate biosynthesis; chorismate from D-erythrose 4-phosphate and phosphoenolpyruvate: step 6/7. Its function is as follows. The AROM polypeptide catalyzes 5 consecutive enzymatic reactions in prechorismate polyaromatic amino acid biosynthesis. This Sordaria macrospora (strain ATCC MYA-333 / DSM 997 / K(L3346) / K-hell) protein is Pentafunctional AROM polypeptide.